A 701-amino-acid polypeptide reads, in one-letter code: E3 ubiquitin-protein ligase RNF19B (701 aa).

The disordered stretch occupies residues 1-97; it reads MGSEKDSESP…PAEPLSTSQA (97 aa). Residues 1-304 are required for ubiquitin ligase activity and for protection against staurosporin-induced cell death; sequence MGSEKDSESP…VCGCEFCWLC (304 aa). Residues 57 to 72 show a composition bias toward low complexity; sequence QQLHQQQQIQQQQLLQ. Residues 103-323 form a TRIAD supradomain region; it reads ELLECPLCLV…LSPSGCTFWG (221 aa). Residues Cys107, Cys110, Cys130, Cys133, Cys194, Cys199, Cys216, Cys221, Cys226, Cys229, His234, Cys239, Cys273, and Cys276 each contribute to the Zn(2+) site. An RING-type 1 zinc finger spans residues 107 to 156; sequence CPLCLVRQPAEQLPELQGCSHRSCLCCLRQYLRIEITESRVQLSCPECAE. The IBR-type zinc-finger motif lies at 174–239; it reads EKYEEFLLRR…KQAWHPNQTC (66 aa). The RING-type 2; atypical zinc finger occupies 273–304; the sequence is CPRCGAYIIKMNDGSCNHMTCAVCGCEFCWLC. Cys288 is an active-site residue. 6 residues coordinate Zn(2+): Cys293, Cys296, Cys301, Cys304, His312, and Cys319. 2 consecutive transmembrane segments (helical) span residues 340–360 and 396–416; these read LIGAPVGITLIAGIAVPAMVI and IITAPVIAAVSVGIGVPIMLA. Disordered stretches follow at residues 472-495 and 658-677; these read LEGAASGLSTTSPSEGLSVAPGGL and AELTSDDCDSPHPKSCHGAP.

The protein belongs to the RBR family. RNF19 subfamily. As to quaternary structure, interacts with UBE2L3, UBE2L6 and UCKL1.

It localises to the cytoplasmic granule membrane. It is found in the endoplasmic reticulum membrane. The enzyme catalyses [E2 ubiquitin-conjugating enzyme]-S-ubiquitinyl-L-cysteine + [acceptor protein]-L-lysine = [E2 ubiquitin-conjugating enzyme]-L-cysteine + [acceptor protein]-N(6)-ubiquitinyl-L-lysine.. Its pathway is protein modification; protein ubiquitination. Functionally, E3 ubiquitin-protein ligase which accepts ubiquitin from E2 ubiquitin-conjugating enzymes UBE2L3 and UBE2L6 in the form of a thioester and then directly transfers the ubiquitin to targeted substrates, such as UCKL1. Involved in the cytolytic activity of natural killer cells and cytotoxic T-cells. Protects against staurosporin-induced cell death. In Danio rerio (Zebrafish), this protein is E3 ubiquitin-protein ligase RNF19B (rnf19b).